The chain runs to 341 residues: Phosphate acyltransferase (341 aa).

Belongs to the PlsX family. Homodimer. Probably interacts with PlsY.

The protein resides in the cytoplasm. It catalyses the reaction a fatty acyl-[ACP] + phosphate = an acyl phosphate + holo-[ACP]. It functions in the pathway lipid metabolism; phospholipid metabolism. In terms of biological role, catalyzes the reversible formation of acyl-phosphate (acyl-PO(4)) from acyl-[acyl-carrier-protein] (acyl-ACP). This enzyme utilizes acyl-ACP as fatty acyl donor, but not acyl-CoA. In Chlorobaculum parvum (strain DSM 263 / NCIMB 8327) (Chlorobium vibrioforme subsp. thiosulfatophilum), this protein is Phosphate acyltransferase.